A 605-amino-acid polypeptide reads, in one-letter code: ATP-dependent RNA helicase dbp9 (605 aa).

The interval 1–30 (MKRKLDANDVPSPEAADKKEKKEEDDADFE) is disordered. Residues 15-24 (AADKKEKKEE) show a composition bias toward basic and acidic residues. The Q motif motif lies at 27–55 (ADFESLNLDPRLRQALIKEKFTKPTLVQA). The region spanning 58 to 236 (IPLALEGKDI…GLFCRSPVTL (179 aa)) is the Helicase ATP-binding domain. 71 to 78 (AKTGSGKT) contacts ATP. The DEAD box motif lies at 184 to 187 (DEAD). One can recognise a Helicase C-terminal domain in the interval 247-469 (GVSQFVVRCA…EVKPYHFEMK (223 aa)). 2 disordered regions span residues 339–373 (ARKS…VSGK) and 564–605 (RKQN…RGRK). Positions 350–361 (EAGSSDEDEGEP) are enriched in acidic residues. Residues 572–591 (RKAREKNRGKGNGRKFAGVK) show a composition bias toward basic residues.

It belongs to the DEAD box helicase family. DDX56/DBP9 subfamily.

It localises to the nucleus. The protein resides in the nucleolus. It catalyses the reaction ATP + H2O = ADP + phosphate + H(+). Its function is as follows. ATP-binding RNA helicase involved in the biogenesis of 60S ribosomal subunits and is required for the normal formation of 25S and 5.8S rRNAs. This Aspergillus oryzae (strain ATCC 42149 / RIB 40) (Yellow koji mold) protein is ATP-dependent RNA helicase dbp9 (dbp9).